Here is a 335-residue protein sequence, read N- to C-terminus: uncharacterized protein (335 aa).

This is an uncharacterized protein from Escherichia coli (strain K12).